The chain runs to 237 residues: Class B acid phosphatase (237 aa).

An N-terminal signal peptide occupies residues 1 to 23 (MRKVTLTLSAIALALSLNGAAMA). The active-site Nucleophile is the Asp-69. Residues Asp-69 and Asp-71 each coordinate Mg(2+). Asp-71 functions as the Proton donor in the catalytic mechanism. Substrate contacts are provided by residues 137–138 (TG) and Lys-177. Asp-192 is a Mg(2+) binding site.

Belongs to the class B bacterial acid phosphatase family. In terms of assembly, homotetramer. Requires Mg(2+) as cofactor.

It localises to the periplasm. The catalysed reaction is a phosphate monoester + H2O = an alcohol + phosphate. In terms of biological role, dephosphorylates several organic phosphate monoesters. Also has a phosphotransferase activity catalyzing the transfer of low-energy phosphate groups from organic phosphate monoesters to free hydroxyl groups of various organic compounds. The polypeptide is Class B acid phosphatase (Proteus mirabilis (strain HI4320)).